The following is a 944-amino-acid chain: MFQNNMKQRMNWEDFYGPNLGYALELYDQYAEDPDSIDPDLKDMFDELGAPPSQIKEASGTKEQGRVTADLIQKIAAAVKLAEDIRTYGHLNASVNPLRKDPKKSELFPLSDYGLTEEEMKAIPASVICKDAPANITNGLEAIQHLRNTYKRTISFEFDHVHDFEERAWITKMVESGELFRKNSPEKLSAVLERLTEVEGFEQFLHRTFVGQKRFSIEGLDALVPVLDDIIAQSVKAGTTNVNIGMAHRGRLNVLAHVLGKPYEIIFSEFQHAPNKDLVPSEGSTGISYGWTGDVKYHLGADRQLQDAETKSARITLANNPSHLEFINPIVEGSTRAAQETRTQKGYPVQDETKSLAILIHGDAAFPGEGIVAETLNLSSLKGYQVGGAIHIIANNMIGFTTESDESRSTKYASDLAKGYEIPIVHVNADDPEACLSAVKFAVEYRKRFNKDFLIDLIGYRRYGHNEMDEPSTTQPMLYDAVRKHPTVKRIFAEKLVSEGLISEEKAQNIETAVTKRIEDAYKKVPAKKEDAVREIELPEPVSNGFPDVDTAIDFDVLRKLNGELINWPESFNVFGKLKRILERRAKAFDDDRKVEWSLAESLAFASILKDGTPIRLTGQDSERGTFAQRNLVLHDSETGEEFVALHHLDDCAASFTVHNSPLSEGSVLGFEYGYNVYSPETLVMWEAQYGDFANAAQVYFDQFISAGRAKWGQKSGLVMLLPHGYEGQGPEHSSGRVERFLQLAAENNWTVANLTSAAQYFHILRRQAKMLLREEIRPLVIMTPKSLLRNPNTVSEVQELSESRFKPVYEQSGLSHAYEKVTRVVLSSGKVSIDISDHFNKMEGDKDWLHIARIEQLYPFPAKDTKELFAKLPNLQEIVWVQEEPQNMGAWSYISPYLSEIAPKGVNVQYIGRRRRSSPAEGDPTVHKKEQERIVSDSLTRKN.

Positions 915–944 (RRRSSPAEGDPTVHKKEQERIVSDSLTRKN) are disordered. Basic and acidic residues predominate over residues 925 to 936 (PTVHKKEQERIV).

Belongs to the alpha-ketoglutarate dehydrogenase family. As to quaternary structure, homodimer. Part of the 2-oxoglutarate dehydrogenase (OGDH) complex composed of E1 (2-oxoglutarate dehydrogenase), E2 (dihydrolipoamide succinyltransferase) and E3 (dihydrolipoamide dehydrogenase); the complex contains multiple copies of the three enzymatic components (E1, E2 and E3). Thiamine diphosphate serves as cofactor.

It carries out the reaction N(6)-[(R)-lipoyl]-L-lysyl-[protein] + 2-oxoglutarate + H(+) = N(6)-[(R)-S(8)-succinyldihydrolipoyl]-L-lysyl-[protein] + CO2. Its function is as follows. E1 component of the 2-oxoglutarate dehydrogenase (OGDH) complex which catalyzes the decarboxylation of 2-oxoglutarate, the first step in the conversion of 2-oxoglutarate to succinyl-CoA and CO(2). The protein is 2-oxoglutarate dehydrogenase E1 component of Bacillus velezensis (strain DSM 23117 / BGSC 10A6 / LMG 26770 / FZB42) (Bacillus amyloliquefaciens subsp. plantarum).